Consider the following 460-residue polypeptide: Argininosuccinate lyase (460 aa).

The protein belongs to the lyase 1 family. Argininosuccinate lyase subfamily.

It is found in the cytoplasm. It carries out the reaction 2-(N(omega)-L-arginino)succinate = fumarate + L-arginine. It functions in the pathway amino-acid biosynthesis; L-arginine biosynthesis; L-arginine from L-ornithine and carbamoyl phosphate: step 3/3. This Campylobacter hominis (strain ATCC BAA-381 / DSM 21671 / CCUG 45161 / LMG 19568 / NCTC 13146 / CH001A) protein is Argininosuccinate lyase.